The chain runs to 675 residues: Gastrula zinc finger protein xFG20-1 (675 aa).

10 consecutive C2H2-type zinc fingers follow at residues 62 to 84 (FTCTECGKTFTRKPNYESHIRAH), 90 to 112 (FSCMVCDKAFAWKSNLLVHYSVH), 118 to 140 (FSCTECDKTFSNKAQLEKHLRVH), 146 to 168 (YSCEQCGKSFAHKCVLDSHQRTH), 174 to 196 (FSCTECGKKFSQRGNLHKHLKTH), 202 to 224 (HLCAECGKTFSFKSTLLEHQKIH), 257 to 279 (FPCTECGEIFSNEHELLTHQSTH), 286 to 308 (FPCTKCWGIFSNEHELRTHQSTH), 344 to 366 (LPCTECGGTFTNEQELLAHQSTH), and 373 to 395 (LPCTECGEIFSDEHELLTHQSTH). A disordered region spans residues 302–325 (RTHQSTHTEGQKSLPSTESGGTFS). Residues 304 to 325 (HQSTHTEGQKSLPSTESGGTFS) show a composition bias toward polar residues. The segment covering 390–407 (THQSTHTSPSTEFGVQTT) has biased composition (polar residues). The tract at residues 390-423 (THQSTHTSPSTEFGVQTTEDNHQSPSKDHTGEKP) is disordered. The segment covering 408 to 421 (EDNHQSPSKDHTGE) has biased composition (basic and acidic residues). 8 consecutive C2H2-type zinc fingers follow at residues 424–446 (FSCSECGKSFFYKSVLKDHLVVH), 452–474 (YHCIECGRSYTHQSSLKSHQRTH), 480–501 (FSCNLCDKLSIISKLRLHYRVH), 507–529 (YPCTECDKTFTKKEQLESHYKVH), 535–557 (YPCQQCGKSFSHKSVLKLHLRTH), 563–585 (FSCTECGKTFTRKPNYESHLTTH), 591–613 (FSCTECGKEFAWKRNLEAHYKMH), and 619–642 (FTCTECGKTFTWKSNLRSHYTTVH).

The protein belongs to the krueppel C2H2-type zinc-finger protein family.

The protein localises to the nucleus. In terms of biological role, may be involved in transcriptional regulation. This chain is Gastrula zinc finger protein xFG20-1, found in Xenopus laevis (African clawed frog).